Here is a 945-residue protein sequence, read N- to C-terminus: Isoleucine--tRNA ligase (945 aa).

The short motif at 66–76 (PYANGDIHLGH) is the 'HIGH' region element. Glu581 is a binding site for L-isoleucyl-5'-AMP. The 'KMSKS' region motif lies at 622 to 626 (KMSKS). Lys625 lines the ATP pocket. Zn(2+) is bound by residues Cys908, Cys911, Cys928, and Cys931.

It belongs to the class-I aminoacyl-tRNA synthetase family. IleS type 1 subfamily. As to quaternary structure, monomer. Zn(2+) serves as cofactor.

Its subcellular location is the cytoplasm. It carries out the reaction tRNA(Ile) + L-isoleucine + ATP = L-isoleucyl-tRNA(Ile) + AMP + diphosphate. Catalyzes the attachment of isoleucine to tRNA(Ile). As IleRS can inadvertently accommodate and process structurally similar amino acids such as valine, to avoid such errors it has two additional distinct tRNA(Ile)-dependent editing activities. One activity is designated as 'pretransfer' editing and involves the hydrolysis of activated Val-AMP. The other activity is designated 'posttransfer' editing and involves deacylation of mischarged Val-tRNA(Ile). The protein is Isoleucine--tRNA ligase of Burkholderia ambifaria (strain ATCC BAA-244 / DSM 16087 / CCUG 44356 / LMG 19182 / AMMD) (Burkholderia cepacia (strain AMMD)).